Reading from the N-terminus, the 154-residue chain is 3-hydroxyacyl-[acyl-carrier-protein] dehydratase FabZ (154 aa).

The active site involves histidine 54.

The protein belongs to the thioester dehydratase family. FabZ subfamily.

It is found in the cytoplasm. The enzyme catalyses a (3R)-hydroxyacyl-[ACP] = a (2E)-enoyl-[ACP] + H2O. Its function is as follows. Involved in unsaturated fatty acids biosynthesis. Catalyzes the dehydration of short chain beta-hydroxyacyl-ACPs and long chain saturated and unsaturated beta-hydroxyacyl-ACPs. The polypeptide is 3-hydroxyacyl-[acyl-carrier-protein] dehydratase FabZ (Shewanella oneidensis (strain ATCC 700550 / JCM 31522 / CIP 106686 / LMG 19005 / NCIMB 14063 / MR-1)).